The sequence spans 1184 residues: DNA-directed RNA polymerase subunit beta (1184 aa).

Residues 1160 to 1184 are disordered; sequence DDDFTNQNDAFNIVQPENAAAEKTE.

It belongs to the RNA polymerase beta chain family. In terms of assembly, the RNAP catalytic core consists of 2 alpha, 1 beta, 1 beta' and 1 omega subunit. When a sigma factor is associated with the core the holoenzyme is formed, which can initiate transcription.

The enzyme catalyses RNA(n) + a ribonucleoside 5'-triphosphate = RNA(n+1) + diphosphate. Functionally, DNA-dependent RNA polymerase catalyzes the transcription of DNA into RNA using the four ribonucleoside triphosphates as substrates. The protein is DNA-directed RNA polymerase subunit beta of Listeria monocytogenes serotype 4b (strain F2365).